We begin with the raw amino-acid sequence, 464 residues long: Asparagine--tRNA ligase (464 aa).

The protein belongs to the class-II aminoacyl-tRNA synthetase family. In terms of assembly, homodimer.

The protein resides in the cytoplasm. It carries out the reaction tRNA(Asn) + L-asparagine + ATP = L-asparaginyl-tRNA(Asn) + AMP + diphosphate + H(+). The polypeptide is Asparagine--tRNA ligase (Acetivibrio thermocellus (strain ATCC 27405 / DSM 1237 / JCM 9322 / NBRC 103400 / NCIMB 10682 / NRRL B-4536 / VPI 7372) (Clostridium thermocellum)).